Consider the following 554-residue polypeptide: NADH-ubiquinone oxidoreductase chain 5 (554 aa).

The next 15 membrane-spanning stretches (helical) occupy residues 6 to 26 (VCGI…LYLL), 57 to 77 (LMFI…SISY), 93 to 113 (ILFL…SIIL), 150 to 170 (IGLL…LSFY), 175 to 197 (FMMI…STWL), 209 to 228 (SLVH…IRYV), 238 to 258 (YIML…NFEL), 263 to 283 (VVAY…SIGS), 286 to 306 (LVFL…MCVG), 332 to 352 (SMIL…VGYY), 379 to 399 (IFTV…FLMM), 409 to 429 (IMCI…KLIF), 441 to 461 (LLMI…IMGF), 480 to 500 (FLFM…MMFT), and 532 to 552 (LMIN…IYLI).

Belongs to the complex I subunit 5 family.

The protein resides in the mitochondrion inner membrane. It catalyses the reaction a ubiquinone + NADH + 5 H(+)(in) = a ubiquinol + NAD(+) + 4 H(+)(out). Core subunit of the mitochondrial membrane respiratory chain NADH dehydrogenase (Complex I) that is believed to belong to the minimal assembly required for catalysis. Complex I functions in the transfer of electrons from NADH to the respiratory chain. The immediate electron acceptor for the enzyme is believed to be ubiquinone. The sequence is that of NADH-ubiquinone oxidoreductase chain 5 (ND5) from Apis mellifera ligustica (Common honeybee).